A 290-amino-acid polypeptide reads, in one-letter code: Small ribosomal subunit protein uS2 (290 aa).

The segment covering 263 to 282 (ATAGATWEAEAGGDWAAESA) has biased composition (low complexity). The tract at residues 263-290 (ATAGATWEAEAGGDWAAESAQPNPETKW) is disordered.

Belongs to the universal ribosomal protein uS2 family. In terms of assembly, component of the small ribosomal subunit. Mature ribosomes consist of a small (40S) and a large (60S) subunit. The 40S subunit contains about 33 different proteins and 1 molecule of RNA (18S). The 60S subunit contains about 49 different proteins and 3 molecules of RNA (25S, 5.8S and 5S). Interacts with rps21.

It is found in the cytoplasm. In terms of biological role, required for the assembly and/or stability of the 40S ribosomal subunit. Required for the processing of the 20S rRNA-precursor to mature 18S rRNA in a late step of the maturation of 40S ribosomal subunits. The polypeptide is Small ribosomal subunit protein uS2 (rps0) (Talaromyces stipitatus (strain ATCC 10500 / CBS 375.48 / QM 6759 / NRRL 1006) (Penicillium stipitatum)).